We begin with the raw amino-acid sequence, 509 residues long: Maturase K (509 aa).

The protein belongs to the intron maturase 2 family. MatK subfamily.

It is found in the plastid. The protein resides in the chloroplast. Functionally, usually encoded in the trnK tRNA gene intron. Probably assists in splicing its own and other chloroplast group II introns. The sequence is that of Maturase K from Otacanthus azureus (Brazilian snapdragon).